The primary structure comprises 381 residues: 8-amino-7-oxononanoate synthase (381 aa).

R27 serves as a coordination point for substrate. 105 to 106 (GY) provides a ligand contact to pyridoxal 5'-phosphate. H130 is a binding site for substrate. Residues S176, 201 to 204 (DEAH), and 232 to 235 (TLSK) each bind pyridoxal 5'-phosphate. The residue at position 235 (K235) is an N6-(pyridoxal phosphate)lysine. T345 is a binding site for substrate.

It belongs to the class-II pyridoxal-phosphate-dependent aminotransferase family. BioF subfamily. Homodimer. It depends on pyridoxal 5'-phosphate as a cofactor.

The enzyme catalyses 6-carboxyhexanoyl-[ACP] + L-alanine + H(+) = (8S)-8-amino-7-oxononanoate + holo-[ACP] + CO2. Its pathway is cofactor biosynthesis; biotin biosynthesis. Catalyzes the decarboxylative condensation of pimeloyl-[acyl-carrier protein] and L-alanine to produce 8-amino-7-oxononanoate (AON), [acyl-carrier protein], and carbon dioxide. The protein is 8-amino-7-oxononanoate synthase of Mycobacterium avium (strain 104).